Consider the following 297-residue polypeptide: Golgi-associated RAB2 interactor protein 1A (297 aa).

Residues 226-257 are disordered; sequence SNRHQTSRDRHTDTATETDNSGNCKSTPLVAS. Positions 240–257 are enriched in polar residues; the sequence is ATETDNSGNCKSTPLVAS.

The protein belongs to the GARIN family. In terms of assembly, interacts (via N-terminus) with RAB2B (in GTP-bound form). Expressed in testis (at protein level).

The protein localises to the golgi apparatus. Its function is as follows. RAB2B effector protein required for accurate acrosome formation and normal male fertility. The protein is Golgi-associated RAB2 interactor protein 1A of Mus musculus (Mouse).